A 687-amino-acid chain; its full sequence is MAYEEKTDWLPDDPINEDDVNRWEKGIKDAHTDLAAHKNDMNNPHNTTKAQIGLGNVDNVQQASKTEFNEHNHDSTRHITSVERDEWNAKETPAGAQYKADQAEANAKAYTDNFAARRDNPNQVTKAQVGLGNVENVKQASLADFDAHLSNSKVHVSEGERNKWNAAQLIKLTGDDGKRIQLQDGTDILTLSSGFYCAVGQSVVNNPVEGDAAWYNYDIVEGGSGRKTIVAYQSWGSMMWIGMVHTDGEFRGWKQIATTDFIDRVQTELDLHENDKTNPHSVTKQQVGLGNVENVKQETPDGAQKKADTALNQSKDYTNSTAFITRPLNSITDANDLNLPPGTYRLDTNYMNANPVLQNQFPLNDNRTGLLIIYPSANKWATRQDWFSISTKTLYTRVAVNGTDYSGWYILENSEGSQNKADKALADAKNYVETNYTNQKLTVLTGSNAIQDARISGNDYKYGITFMDIGANNTTGYPLTYGFVKNEKHSNYRFTQYFYGNADTTSGSYDHVGTWIRHWWADSGWTAWQKISGFAHANIGTTGRQALIKGENNKIKYNRIIKDSHKLFDTKNNRFVASHAGMHLVSASLYIENTERYSNFELYVYVNGTKYKLMNQFRMPTPSNNSDNEFNATVTGSVTVPLDAGDYVEIYVYVGYSGDVTRYVTDSNGALNYFDVLELGGRNYPRV.

The protein to B.subtilis YqcC.

This is Phage-like element PBSX protein XkdV (xkdV) from Bacillus subtilis (strain 168).